The chain runs to 301 residues: ATP synthase gamma chain (301 aa).

It belongs to the ATPase gamma chain family. In terms of assembly, F-type ATPases have 2 components, CF(1) - the catalytic core - and CF(0) - the membrane proton channel. CF(1) has five subunits: alpha(3), beta(3), gamma(1), delta(1), epsilon(1). CF(0) has three main subunits: a, b and c.

It is found in the cell inner membrane. Produces ATP from ADP in the presence of a proton gradient across the membrane. The gamma chain is believed to be important in regulating ATPase activity and the flow of protons through the CF(0) complex. The polypeptide is ATP synthase gamma chain (Helicobacter pylori (strain Shi470)).